Consider the following 193-residue polypeptide: Tetrahydromethanopterin S-methyltransferase subunit A 2 (193 aa).

Over 1 to 38 (MADKKPTAENWPVVSGDYIVGDPESPVAVTTLASHNED) the chain is Cytoplasmic. Residues 39–58 (IPAAAGAAIAGPCKTENLGI) form a helical membrane-spanning segment. The Extracellular portion of the chain corresponds to 59–193 (EKVVANIISN…SESEKIESEA (135 aa)). A 5-hydroxybenzimidazolylcob(I)amide-binding site is contributed by His84. The interval 174–193 (SKKSSFVESSSESEKIESEA) is disordered.

Belongs to the MtrA family. As to quaternary structure, the complex is composed of 8 subunits; MtrA, MtrB, MtrC, MtrD, MtrE, MtrF, MtrG and MtrH. It depends on 5-hydroxybenzimidazolylcob(I)amide as a cofactor.

The protein localises to the cell membrane. It catalyses the reaction 5-methyl-5,6,7,8-tetrahydromethanopterin + coenzyme M + 2 Na(+)(in) = 5,6,7,8-tetrahydromethanopterin + methyl-coenzyme M + 2 Na(+)(out). Its pathway is one-carbon metabolism; methanogenesis from CO(2); methyl-coenzyme M from 5,10-methylene-5,6,7,8-tetrahydromethanopterin: step 2/2. Part of a complex that catalyzes the formation of methyl-coenzyme M and tetrahydromethanopterin from coenzyme M and methyl-tetrahydromethanopterin. This is an energy-conserving, sodium-ion translocating step. This is Tetrahydromethanopterin S-methyltransferase subunit A 2 from Methanobrevibacter ruminantium (strain ATCC 35063 / DSM 1093 / JCM 13430 / OCM 146 / M1) (Methanobacterium ruminantium).